We begin with the raw amino-acid sequence, 125 residues long: Large ribosomal subunit protein bL12 (125 aa).

This sequence belongs to the bacterial ribosomal protein bL12 family. In terms of assembly, homodimer. Part of the ribosomal stalk of the 50S ribosomal subunit. Forms a multimeric L10(L12)X complex, where L10 forms an elongated spine to which 2 to 4 L12 dimers bind in a sequential fashion. Binds GTP-bound translation factors.

In terms of biological role, forms part of the ribosomal stalk which helps the ribosome interact with GTP-bound translation factors. Is thus essential for accurate translation. This is Large ribosomal subunit protein bL12 from Cereibacter sphaeroides (Rhodobacter sphaeroides).